The following is a 377-amino-acid chain: Nitric oxide reductase FlRd-NAD(+) reductase (377 aa).

This sequence belongs to the FAD-dependent oxidoreductase family. It depends on FAD as a cofactor.

It localises to the cytoplasm. It catalyses the reaction 2 reduced [nitric oxide reductase rubredoxin domain] + NAD(+) + H(+) = 2 oxidized [nitric oxide reductase rubredoxin domain] + NADH. Its pathway is nitrogen metabolism; nitric oxide reduction. In terms of biological role, one of at least two accessory proteins for anaerobic nitric oxide (NO) reductase. Reduces the rubredoxin moiety of NO reductase. The chain is Nitric oxide reductase FlRd-NAD(+) reductase from Escherichia coli O6:H1 (strain CFT073 / ATCC 700928 / UPEC).